A 1366-amino-acid chain; its full sequence is DNA-directed RNA polymerase subunit beta'' (1366 aa).

Positions 220, 290, 297, and 300 each coordinate Zn(2+).

The protein belongs to the RNA polymerase beta' chain family. RpoC2 subfamily. As to quaternary structure, in plastids the minimal PEP RNA polymerase catalytic core is composed of four subunits: alpha, beta, beta', and beta''. When a (nuclear-encoded) sigma factor is associated with the core the holoenzyme is formed, which can initiate transcription. The cofactor is Zn(2+).

Its subcellular location is the plastid. It localises to the chloroplast. It carries out the reaction RNA(n) + a ribonucleoside 5'-triphosphate = RNA(n+1) + diphosphate. In terms of biological role, DNA-dependent RNA polymerase catalyzes the transcription of DNA into RNA using the four ribonucleoside triphosphates as substrates. The chain is DNA-directed RNA polymerase subunit beta'' from Lemna minor (Common duckweed).